An 872-amino-acid polypeptide reads, in one-letter code: UPF0182 protein Noc_0961 (872 aa).

7 helical membrane-spanning segments follow: residues 8 to 28 (FLILGLSIVVLAVFLLIAGFE), 56 to 76 (LVVFIQVSIVFFLIFFVNFWV), 109 to 129 (SLWIYTPLSLVLSIIIAWPLF), 159 to 179 (LFSFPIYVLILQRLLISFLLL), 207 to 227 (WHLSILVLMVFFIEIWDFFLQ), 254 to 274 (PFIWLSMFFLLGIAFFLLLFI), and 282 to 302 (TLAVFSLLFILSLGARHFHFL).

The protein belongs to the UPF0182 family.

It is found in the cell membrane. The polypeptide is UPF0182 protein Noc_0961 (Nitrosococcus oceani (strain ATCC 19707 / BCRC 17464 / JCM 30415 / NCIMB 11848 / C-107)).